Consider the following 94-residue polypeptide: Co-chaperonin GroES (94 aa).

It belongs to the GroES chaperonin family. Heptamer of 7 subunits arranged in a ring. Interacts with the chaperonin GroEL.

The protein resides in the cytoplasm. Its function is as follows. Together with the chaperonin GroEL, plays an essential role in assisting protein folding. The GroEL-GroES system forms a nano-cage that allows encapsulation of the non-native substrate proteins and provides a physical environment optimized to promote and accelerate protein folding. GroES binds to the apical surface of the GroEL ring, thereby capping the opening of the GroEL channel. The protein is Co-chaperonin GroES of Geobacillus stearothermophilus (Bacillus stearothermophilus).